The primary structure comprises 220 residues: GTP cyclohydrolase 1 (220 aa).

3 residues coordinate Zn(2+): cysteine 110, histidine 113, and cysteine 181.

Belongs to the GTP cyclohydrolase I family. In terms of assembly, toroid-shaped homodecamer, composed of two pentamers of five dimers.

It catalyses the reaction GTP + H2O = 7,8-dihydroneopterin 3'-triphosphate + formate + H(+). It participates in cofactor biosynthesis; 7,8-dihydroneopterin triphosphate biosynthesis; 7,8-dihydroneopterin triphosphate from GTP: step 1/1. The sequence is that of GTP cyclohydrolase 1 from Baumannia cicadellinicola subsp. Homalodisca coagulata.